The chain runs to 678 residues: Penicillin-binding protein activator LpoA (678 aa).

A signal peptide spans 1-26 (MVPSTFSRLKAARCLPVVLAALIFAG). Cysteine 27 is lipidated: N-palmitoyl cysteine. Cysteine 27 is lipidated: S-diacylglycerol cysteine. 2 disordered regions span residues 304–338 (AEQP…SVPV) and 495–530 (IALT…QFTN). Positions 513 to 529 (TTNNPTLQTTPTDDQFT) are enriched in low complexity.

The protein belongs to the LpoA family. As to quaternary structure, interacts with PBP1a.

The protein localises to the cell outer membrane. Regulator of peptidoglycan synthesis that is essential for the function of penicillin-binding protein 1A (PBP1a). In Escherichia coli O6:H1 (strain CFT073 / ATCC 700928 / UPEC), this protein is Penicillin-binding protein activator LpoA.